The following is a 520-amino-acid chain: Putative cytochrome P450 CYP13A5 (520 aa).

Cys464 contributes to the heme binding site.

Belongs to the cytochrome P450 family. The cofactor is heme.

In terms of biological role, cytochromes P450 are a group of heme-thiolate monooxygenases. They oxidize a variety of structurally unrelated compounds, including steroids, fatty acids, and xenobiotics. In Caenorhabditis elegans, this protein is Putative cytochrome P450 CYP13A5 (cyp-13A5).